The following is a 178-amino-acid chain: Large ribosomal subunit protein uL6 (178 aa).

The protein belongs to the universal ribosomal protein uL6 family. As to quaternary structure, part of the 50S ribosomal subunit.

Functionally, this protein binds to the 23S rRNA, and is important in its secondary structure. It is located near the subunit interface in the base of the L7/L12 stalk, and near the tRNA binding site of the peptidyltransferase center. This chain is Large ribosomal subunit protein uL6, found in Wolinella succinogenes (strain ATCC 29543 / DSM 1740 / CCUG 13145 / JCM 31913 / LMG 7466 / NCTC 11488 / FDC 602W) (Vibrio succinogenes).